The primary structure comprises 306 residues: Heme A synthase (306 aa).

At 1 to 5 (MKALR) the chain is on the cytoplasmic side. Residues 6-26 (AVSLANTAVMLLAVLWGAWVT) form a helical membrane-spanning segment. Residues 27–56 (SSDSGDGCGASWPLCKGTFMPDWDYAAIVE) lie on the Extracellular side of the membrane. Cys34 and Cys41 form a disulfide bridge. Glu56 is an active-site residue. A helical transmembrane segment spans residues 57–77 (FGHRVVSALAGLLSVAVLVWV). His59 serves as a coordination point for heme o. The Cytoplasmic portion of the chain corresponds to 78–89 (ARVRPSETRLKR). Residues 90–110 (LAFGTFFFVVLQGGLGAAAVL) traverse the membrane as a helical segment. Residues 111–116 (RPQPDL) are Extracellular-facing. Residues 117-137 (VMALHFGFSLLCFTFALLVTV) traverse the membrane as a helical segment. Residue His121 participates in heme o binding. The Cytoplasmic portion of the chain corresponds to 138–164 (ALGQGERAAFQRPDVSAQPVAPGLRTQ). A helical membrane pass occupies residues 165 to 185 (IWGLAVYTYLVVYLGAYVRHL). Topologically, residues 186–206 (GASMACTGWPLCNGELIPPLY) are extracellular. Cys191 and Cys197 are disulfide-bonded. A helical membrane pass occupies residues 207–227 (GPVGANFAHRLGAALAVVLVL). Position 215 (His215) interacts with heme b. Residues 228–247 (RLWWTARRLTERDDLRRGAA) are Cytoplasmic-facing. Residues 248–268 (WALALMAAQVASGALFPLGYL) form a helical membrane-spanning segment. At 269–277 (NLLTQLLHT) the chain is on the extracellular side. His276 serves as a coordination point for heme b. The chain crosses the membrane as a helical span at residues 278–298 (GLITGFWGVLSYLCYLTLPVG). Residues 299–306 (RETVAVSA) are Cytoplasmic-facing.

Belongs to the COX15/CtaA family. Type 1 subfamily. Interacts with CtaB. It depends on heme b as a cofactor.

Its subcellular location is the cell membrane. The enzyme catalyses Fe(II)-heme o + 2 A + H2O = Fe(II)-heme a + 2 AH2. Its pathway is porphyrin-containing compound metabolism; heme A biosynthesis; heme A from heme O: step 1/1. In terms of biological role, catalyzes the conversion of heme O to heme A by two successive hydroxylations of the methyl group at C8. The first hydroxylation forms heme I, the second hydroxylation results in an unstable dihydroxymethyl group, which spontaneously dehydrates, resulting in the formyl group of heme A. The sequence is that of Heme A synthase from Symbiobacterium thermophilum (strain DSM 24528 / JCM 14929 / IAM 14863 / T).